A 60-amino-acid polypeptide reads, in one-letter code: UPF0434 protein YcaR (60 aa).

Belongs to the UPF0434 family.

In Escherichia fergusonii (strain ATCC 35469 / DSM 13698 / CCUG 18766 / IAM 14443 / JCM 21226 / LMG 7866 / NBRC 102419 / NCTC 12128 / CDC 0568-73), this protein is UPF0434 protein YcaR.